We begin with the raw amino-acid sequence, 119 residues long: Large ribosomal subunit protein uL18 (119 aa).

Belongs to the universal ribosomal protein uL18 family. In terms of assembly, part of the 50S ribosomal subunit; part of the 5S rRNA/L5/L18/L25 subcomplex. Contacts the 5S and 23S rRNAs.

This is one of the proteins that bind and probably mediate the attachment of the 5S RNA into the large ribosomal subunit, where it forms part of the central protuberance. This chain is Large ribosomal subunit protein uL18, found in Xylella fastidiosa (strain 9a5c).